The sequence spans 209 residues: Uracil phosphoribosyltransferase (209 aa).

5-phospho-alpha-D-ribose 1-diphosphate is bound by residues Arg-79, Arg-104, and 131–139; that span reads DPMLATGAS. Residues Ile-194 and 199 to 201 each bind uracil; that span reads GDA. 5-phospho-alpha-D-ribose 1-diphosphate is bound at residue Asp-200.

It belongs to the UPRTase family. The cofactor is Mg(2+).

The catalysed reaction is UMP + diphosphate = 5-phospho-alpha-D-ribose 1-diphosphate + uracil. The protein operates within pyrimidine metabolism; UMP biosynthesis via salvage pathway; UMP from uracil: step 1/1. Its activity is regulated as follows. Allosterically activated by GTP. Functionally, catalyzes the conversion of uracil and 5-phospho-alpha-D-ribose 1-diphosphate (PRPP) to UMP and diphosphate. In Staphylococcus epidermidis (strain ATCC 35984 / DSM 28319 / BCRC 17069 / CCUG 31568 / BM 3577 / RP62A), this protein is Uracil phosphoribosyltransferase.